Consider the following 276-residue polypeptide: Malonyl-[acyl-carrier protein] O-methyltransferase (276 aa).

This sequence belongs to the methyltransferase superfamily.

It catalyses the reaction malonyl-[ACP] + S-adenosyl-L-methionine = malonyl-[ACP] methyl ester + S-adenosyl-L-homocysteine. Its pathway is cofactor biosynthesis; biotin biosynthesis. Converts the free carboxyl group of a malonyl-thioester to its methyl ester by transfer of a methyl group from S-adenosyl-L-methionine (SAM). It allows to synthesize pimeloyl-ACP via the fatty acid synthetic pathway. In Paenibacillus sp. (strain JDR-2), this protein is Malonyl-[acyl-carrier protein] O-methyltransferase.